The primary structure comprises 216 residues: Probable nicotinate-nucleotide adenylyltransferase (216 aa).

The protein belongs to the NadD family.

The catalysed reaction is nicotinate beta-D-ribonucleotide + ATP + H(+) = deamido-NAD(+) + diphosphate. The protein operates within cofactor biosynthesis; NAD(+) biosynthesis; deamido-NAD(+) from nicotinate D-ribonucleotide: step 1/1. Its function is as follows. Catalyzes the reversible adenylation of nicotinate mononucleotide (NaMN) to nicotinic acid adenine dinucleotide (NaAD). This Shewanella baltica (strain OS195) protein is Probable nicotinate-nucleotide adenylyltransferase.